The sequence spans 220 residues: Ribosomal RNA large subunit methyltransferase E (220 aa).

Residues glycine 60, tryptophan 62, aspartate 92, aspartate 108, and aspartate 133 each contribute to the S-adenosyl-L-methionine site. Lysine 173 functions as the Proton acceptor in the catalytic mechanism.

This sequence belongs to the class I-like SAM-binding methyltransferase superfamily. RNA methyltransferase RlmE family.

It is found in the cytoplasm. The enzyme catalyses uridine(2552) in 23S rRNA + S-adenosyl-L-methionine = 2'-O-methyluridine(2552) in 23S rRNA + S-adenosyl-L-homocysteine + H(+). In terms of biological role, specifically methylates the uridine in position 2552 of 23S rRNA at the 2'-O position of the ribose in the fully assembled 50S ribosomal subunit. The sequence is that of Ribosomal RNA large subunit methyltransferase E from Paraburkholderia xenovorans (strain LB400).